The chain runs to 128 residues: Large ribosomal subunit protein uL18 (128 aa).

The protein belongs to the universal ribosomal protein uL18 family. In terms of assembly, part of the 50S ribosomal subunit; part of the 5S rRNA/L5/L18/L25 subcomplex. Contacts the 5S and 23S rRNAs.

In terms of biological role, this is one of the proteins that bind and probably mediate the attachment of the 5S RNA into the large ribosomal subunit, where it forms part of the central protuberance. This chain is Large ribosomal subunit protein uL18, found in Acidothermus cellulolyticus (strain ATCC 43068 / DSM 8971 / 11B).